The primary structure comprises 372 residues: tRNA-specific 2-thiouridylase MnmA (372 aa).

ATP is bound by residues 16–23 (GMSGGVDS) and M42. Residues 102–104 (NPD) are interaction with target base in tRNA. C107 serves as the catalytic Nucleophile. The cysteines at positions 107 and 205 are disulfide-linked. G132 serves as a coordination point for ATP. The interval 155–157 (KDQ) is interaction with tRNA. The active-site Cysteine persulfide intermediate is C205. Residues 317 to 318 (RY) form an interaction with tRNA region.

Belongs to the MnmA/TRMU family.

It is found in the cytoplasm. It carries out the reaction S-sulfanyl-L-cysteinyl-[protein] + uridine(34) in tRNA + AH2 + ATP = 2-thiouridine(34) in tRNA + L-cysteinyl-[protein] + A + AMP + diphosphate + H(+). Its function is as follows. Catalyzes the 2-thiolation of uridine at the wobble position (U34) of tRNA, leading to the formation of s(2)U34. This is tRNA-specific 2-thiouridylase MnmA from Shewanella denitrificans (strain OS217 / ATCC BAA-1090 / DSM 15013).